The following is a 1840-amino-acid chain: Collagen alpha-1(V) chain (1840 aa).

The signal sequence occupies residues methionine 1–alanine 36. One can recognise a Laminin G-like domain in the interval aspartate 72 to cysteine 244. A nonhelical region region spans residues arginine 231–glutamate 445. Residues tyrosine 234, tyrosine 236, tyrosine 240, tyrosine 262, tyrosine 263, and tyrosine 271 each carry the sulfotyrosine modification. Disordered stretches follow at residues proline 242–methionine 523, phenylalanine 528–glutamine 547, and glycine 561–glutamine 1576. Over residues asparagine 258–glycine 268 the composition is skewed to acidic residues. Composition is skewed to low complexity over residues aspartate 335–aspartate 352 and threonine 376–asparagine 386. An interrupted collagenous region region spans residues glycine 446 to arginine 560. Pro residues predominate over residues proline 472–threonine 487. Over residues leucine 508–methionine 523 the composition is skewed to low complexity. A compositionally biased stretch (low complexity) spans glycine 561–proline 572. A triple-helical region region spans residues glycine 561–glycine 1572. 4-hydroxyproline occurs at positions 572, 578, and 623. Position 629 is a 5-hydroxylysine (lysine 629). Proline 641 carries the post-translational modification 4-hydroxyproline. A 5-hydroxylysine modification is found at lysine 644. Residues proline 650, proline 656, proline 659, proline 677, and proline 680 each carry the 4-hydroxyproline modification. The segment covering proline 673 to proline 688 has biased composition (low complexity). 3-hydroxyproline is present on residues proline 682 and proline 688. The segment covering lysine 689–proline 698 has biased composition (pro residues). 4-hydroxyproline occurs at positions 692, 698, and 707. Lysine 710 is subject to 5-hydroxylysine. 4-hydroxyproline occurs at positions 719, 722, 728, and 734. Residues glutamine 724–proline 743 show a composition bias toward low complexity. Residue lysine 746 is modified to 5-hydroxylysine. Low complexity predominate over residues leucine 749–proline 758. 5 positions are modified to 4-hydroxyproline: proline 752, proline 758, proline 764, proline 767, and proline 773. Lysine 776 bears the 5-hydroxylysine mark. 4-hydroxyproline is present on residues proline 782 and proline 791. 5-hydroxylysine is present on residues lysine 797, lysine 806, lysine 809, and lysine 812. At proline 818 the chain carries 4-hydroxyproline. Lysine 821 is modified (5-hydroxylysine). The residue at position 836 (proline 836) is a 4-hydroxyproline. Positions arginine 839–lysine 848 are enriched in basic and acidic residues. 2 positions are modified to 5-hydroxylysine: lysine 848 and lysine 866. 4-hydroxyproline occurs at positions 872, 875, and 878. The residue at position 884 (lysine 884) is a 5-hydroxylysine. Residues proline 890 and proline 893 each carry the 4-hydroxyproline modification. Position 899 is a 5-hydroxylysine (lysine 899). 4-hydroxyproline occurs at positions 905 and 908. The span at proline 910 to proline 919 shows a compositional bias: low complexity. Proline 932 and proline 947 each carry 4-hydroxyproline. Composition is skewed to low complexity over residues lysine 973 to threonine 992 and valine 1001 to methionine 1013. A 4-hydroxyproline mark is found at proline 1019, proline 1022, proline 1025, and proline 1031. Residues serine 1090 to proline 1106 are compositionally biased toward low complexity. The segment covering arginine 1108–proline 1117 has biased composition (pro residues). 2 positions are modified to 4-hydroxyproline: proline 1223 and proline 1226. A compositionally biased stretch (low complexity) spans proline 1261 to proline 1270. The span at glycine 1296–glycine 1305 shows a compositional bias: gly residues. Pro residues-rich tracts occupy residues threonine 1382 to alanine 1400 and serine 1456 to leucine 1471. A 4-hydroxyproline mark is found at proline 1469 and proline 1472. The segment covering proline 1487–proline 1496 has biased composition (low complexity). Positions proline 1528–proline 1543 are enriched in pro residues. A compositionally biased stretch (low complexity) spans lysine 1544 to lysine 1556. Positions glutamate 1573–alanine 1607 are nonhelical region. A sulfotyrosine mark is found at tyrosine 1603 and tyrosine 1606. Positions glutamate 1611–leucine 1839 constitute a Fibrillar collagen NC1 domain.

Belongs to the fibrillar collagen family. As to quaternary structure, trimers of two alpha 1(V) and one alpha 2(V) chains in most tissues and trimers of one alpha 1(V), one alpha 2(V), and one alpha 3(V) chains in placenta. Interacts with CSPG4. Post-translationally, hydroxylation on proline residues within the sequence motif, GXPG, is most likely to be 4-hydroxy as this fits the requirement for 4-hydroxylation in vertebrates. In terms of processing, sulfated on 40% of tyrosines. As to expression, ubiquitously expressed.

It is found in the secreted. Its subcellular location is the extracellular space. The protein resides in the extracellular matrix. Its function is as follows. Type V collagen is a member of group I collagen (fibrillar forming collagen). It is a minor connective tissue component of nearly ubiquitous distribution. Type V collagen binds to DNA, heparan sulfate, thrombospondin, heparin, and insulin. The protein is Collagen alpha-1(V) chain (COL5A1) of Cricetulus longicaudatus (Long-tailed dwarf hamster).